We begin with the raw amino-acid sequence, 525 residues long: Frizzled-4 (525 aa).

A signal peptide spans 1–24; the sequence is MERRGGGGRMLALLLAGLLGGARG. Over 25 to 200 the chain is Extracellular; the sequence is FGDEEERRCD…KCGYDAGLYS (176 aa). An FZ domain is found at 28 to 149; it reads EEERRCDAIR…NDHNHMCMEG (122 aa). 8 cysteine pairs are disulfide-bonded: Cys-33/Cys-94, Cys-41/Cys-87, Cys-78/Cys-116, Cys-105/Cys-146, Cys-109/Cys-133, Cys-169/Cys-188, Cys-192/Cys-270, and Cys-290/Cys-365. An N-linked (GlcNAc...) asparagine glycan is attached at Asn-47. Residue Asn-132 is glycosylated (N-linked (GlcNAc...) asparagine). The helical transmembrane segment at 201–231 threads the bilayer; it reads RSAKEFTDIWMAVWASLCFISTAFTVLTFLI. Residues 232-237 are Cytoplasmic-facing; it reads DSSRFS. Residues 238–263 traverse the membrane as a helical segment; that stretch reads YPERPIIFLSMCYNIYSIAYIVRLTV. Over 264 to 287 the chain is Extracellular; it reads GRERISCDFEEAAEPVLIQEGLKN. A helical transmembrane segment spans residues 288-321; the sequence is TGCAIIFLLMYFFGMASSIWWVILTLTWFLAAGL. Over 322 to 324 the chain is Cytoplasmic; the sequence is KWG. Residues 325 to 353 traverse the membrane as a helical segment; that stretch reads HEAIEMHSSYFHIAAWAIPAVKTIVILIM. The Extracellular segment spans residues 354-371; the sequence is RLVDADELTGLCYVGNQN. A helical transmembrane segment spans residues 372-406; that stretch reads LDALTGFVVAPLFTYLVIGTLFIAAGLVALFKIRS. Topologically, residues 407-419 are cytoplasmic; it reads NLQKDGTKTDKLE. The chain crosses the membrane as a helical span at residues 420 to 448; that stretch reads RLMVKIGVFSVLYTVPATCVIACYFYEIS. Over 449–461 the chain is Extracellular; the sequence is NWAVFRYSADDSN. Residues 462 to 483 traverse the membrane as a helical segment; sequence MAVEMLKIFMSLLVGITSGMWI. At 484–525 the chain is on the cytoplasmic side; it reads WSAKTLHTWQKCSNRLVNSGKVKREKRADGWVKPGKGNETVV. Residues 487–492 carry the Lys-Thr-X-X-X-Trp motif, mediates interaction with the PDZ domain of Dvl family members motif; the sequence is KTLHTW. Residues 523 to 525 carry the PDZ-binding motif; it reads TVV.

It belongs to the G-protein coupled receptor Fz/Smo family. As to quaternary structure, interacts (via FZ domain) with TSKU; TSKU competes with WNT2B for binding to FZD4, inhibiting Wnt signaling and repressing peripheral eye development. Expressed in the developing kidney, interdigital spaces and optic cup.

The protein localises to the cell membrane. Receptor for Wnt proteins. Most frizzled receptors are coupled to the beta-catenin canonical signaling pathway, which leads to the activation of disheveled proteins, inhibition of GSK-3 kinase, nuclear accumulation of beta-catenin and activation of Wnt target genes. A second signaling pathway involving PKC and calcium fluxes has been seen for some family members, but it is not yet clear if it represents a distinct pathway or if it can be integrated in the canonical pathway, as PKC seems to be required for Wnt-mediated inactivation of GSK-3 kinase. Both pathways seem to involve interactions with G-proteins. May be involved in transduction and intercellular transmission of polarity information during tissue morphogenesis and/or in differentiated tissues. The sequence is that of Frizzled-4 (FZD4) from Gallus gallus (Chicken).